Here is a 521-residue protein sequence, read N- to C-terminus: Vang-like protein 2 (521 aa).

A disordered region spans residues 1-81 (MDTESQYSGY…TTVVTGTSEH (81 aa)). The Cytoplasmic segment spans residues 1–108 (MDTESQYSGY…VPLDCSRHLG (108 aa)). Basic residues predominate over residues 15-33 (GHSRSSRKHRDRRDRHRSK). The span at 57–67 (ESTRGDERDDN) shows a compositional bias: basic and acidic residues. The segment covering 69-81 (GETTTVVTGTSEH) has biased composition (low complexity). A helical transmembrane segment spans residues 109 to 129 (VAAGATLALLSFLTPLAFLLL). The Extracellular segment spans residues 130–147 (PPLLWREELEPCGTACEG). Residues 148 to 168 (LFISVAFKLLILLLGSWALFF) traverse the membrane as a helical segment. The Cytoplasmic segment spans residues 169–178 (RRPKASLPRV). A helical transmembrane segment spans residues 179–199 (FVLRALLMVLVFLLVVSYWLF). Topologically, residues 200 to 217 (YGVRILDARERSYQGVVQ) are extracellular. The helical transmembrane segment at 218-238 (FAVSLVDALLFVHYLAVVLLE) threads the bilayer. Topologically, residues 239 to 521 (LRQLQPQFTL…VMRLQSETSV (283 aa)) are cytoplasmic.

Belongs to the Vang family. In terms of assembly, homodimer and heterodimer with VANGL1. Interacts through its C-terminal region with the N-terminal half of DVL1, DVL2 and DVL3. The PDZ domain of DVL1, DVL2 and DVL3 is required for the interaction. Also interacts with the PDZ domains of MAGI3, SCRIB/SCRB1 and FZD3. Interacts with PRICKLE3.

It is found in the cell membrane. Functionally, involved in the control of early morphogenesis and patterning of both axial midline structures and the development of neural plate. Plays a role in the regulation of planar cell polarity, particularly in the orientation of stereociliary bundles in the cochlea. Required for polarization and movement of myocardializing cells in the outflow tract and seems to act via RHOA signaling to regulate this process. Required for cell surface localization of FZD3 and FZD6 in the inner ear. The sequence is that of Vang-like protein 2 (VANGL2) from Homo sapiens (Human).